Consider the following 252-residue polypeptide: Tabtoxin biosynthesis enzyme (252 aa).

Residues 1–23 form a disordered region; that stretch reads MYQRTATQLARKPASKQGETEMN.

Functionally, may play a role in tabtoxin biosynthesis. In Pseudomonas amygdali pv. tabaci (Pseudomonas syringae pv. tabaci), this protein is Tabtoxin biosynthesis enzyme (tblA).